Reading from the N-terminus, the 819-residue chain is Leucine--tRNA ligase (819 aa).

The short motif at 40-51 (PYPSGAGLHVGH) is the 'HIGH' region element. A 'KMSKS' region motif is present at residues 600 to 604 (KMSKS). Lys-603 provides a ligand contact to ATP.

This sequence belongs to the class-I aminoacyl-tRNA synthetase family.

It is found in the cytoplasm. It carries out the reaction tRNA(Leu) + L-leucine + ATP = L-leucyl-tRNA(Leu) + AMP + diphosphate. In Chlamydia trachomatis serovar D (strain ATCC VR-885 / DSM 19411 / UW-3/Cx), this protein is Leucine--tRNA ligase.